A 555-amino-acid chain; its full sequence is Formate--tetrahydrofolate ligase (555 aa).

The protein belongs to the formate--tetrahydrofolate ligase family.

It carries out the reaction (6S)-5,6,7,8-tetrahydrofolate + formate + ATP = (6R)-10-formyltetrahydrofolate + ADP + phosphate. It participates in one-carbon metabolism; tetrahydrofolate interconversion. The polypeptide is Formate--tetrahydrofolate ligase (Porphyromonas gingivalis (strain ATCC BAA-308 / W83)).